The primary structure comprises 332 residues: Zinc finger protein CONSTANS-LIKE 13 (332 aa).

Residues Cys-13, Cys-16, Cys-36, His-41, Cys-56, Cys-59, Cys-79, and His-84 each contribute to the Zn(2+) site. The segment at 13-55 (CDYCDSSVALVYCKADSAKLCLACDKQVHVANQLFAKHFRSLL) adopts a B box-type 1; atypical zinc-finger fold. A B box-type 2; atypical zinc finger spans residues 56–96 (CDSCNESPSSLFCETERSVLCQNCDWQHHTASSSLHSRRPF). The CCT domain maps to 287–329 (RNSALSRYKEKKKSRRYEKHIRYESRKVRAESRTRIRGRFAKA).

It belongs to the CONSTANS family.

Its subcellular location is the nucleus. The chain is Zinc finger protein CONSTANS-LIKE 13 (COL13) from Arabidopsis thaliana (Mouse-ear cress).